The sequence spans 1333 residues: NPC1-like intracellular cholesterol transporter 1 (1333 aa).

Positions 1 to 20 are cleaved as a signal peptide; it reads MAAAWQGWLLWALLLNSAQG. Residues 21-284 lie on the Extracellular side of the membrane; it reads ELYTPTHKAG…SFYMGRMPGW (264 aa). 9 cysteine pairs are disulfide-bonded: cysteine 32/cysteine 90, cysteine 38/cysteine 56, cysteine 77/cysteine 125, cysteine 91/cysteine 129, cysteine 113/cysteine 254, cysteine 116/cysteine 172, cysteine 189/cysteine 197, cysteine 243/cysteine 259, and cysteine 256/cysteine 263. The helical transmembrane segment at 285 to 305 threads the bilayer; that stretch reads LALIIIFTAVFVLLSVVLVYL. Over 306 to 352 the chain is Cytoplasmic; that stretch reads RVASNRNKNKTAGSQEAPNLPRKRRFSPHTVLGRFFESWGTRVASWP. The chain crosses the membrane as a helical span at residues 353-373; it reads LTVLALSFIVVIALSVGLTFI. The Extracellular portion of the chain corresponds to 374–632; the sequence is ELTTDPVELW…DEINRTTIQD (259 aa). Disulfide bonds link cysteine 471-cysteine 485 and cysteine 525-cysteine 542. One can recognise an SSD domain in the interval 632 to 797; sequence DLPVFAISYL…MTAFVALLSL (166 aa). Residues 633–653 traverse the membrane as a helical segment; it reads LPVFAISYLIVFLYISLALGS. The Cytoplasmic segment spans residues 654–665; the sequence is YSRWSRVAVDSK. Residues 666–686 form a helical membrane-spanning segment; sequence ATLGLGGVAVVLGAVVAAMGF. Over 687-696 the chain is Extracellular; the sequence is YSYLGVPSSL. A helical transmembrane segment spans residues 697–717; the sequence is VIIQVVPFLVLAVGADNIFIF. Residues 718-742 lie on the Cytoplasmic side of the membrane; that stretch reads VLEYQRLPRMPGEQREAHIGRTLGS. The chain crosses the membrane as a helical span at residues 743–763; that stretch reads VAPSMLLCSLSEAICFFLGAL. Topologically, residues 764–776 are extracellular; the sequence is TSMPAVRTFALTS. A helical transmembrane segment spans residues 777-797; the sequence is GLAIIFDFLLQMTAFVALLSL. Topologically, residues 798 to 846 are cytoplasmic; that stretch reads DSKRQEASRPDVVCCFSSRNLPPPKQKEGLLLCFFRKIYTPFLLHRFIR. A helical membrane pass occupies residues 847–867; it reads PVVLLLFLVLFGANLYLMCNI. The Extracellular portion of the chain corresponds to 868–1113; sequence SVGLDQDLAL…QQYLTVLPEG (246 aa). 3 disulfides stabilise this stretch: cysteine 920–cysteine 925, cysteine 967–cysteine 1025, and cysteine 981–cysteine 990. The chain crosses the membrane as a helical span at residues 1114-1134; it reads IFTLALCFVPTFVVCYLLLGL. Residues 1135-1142 lie on the Cytoplasmic side of the membrane; that stretch reads DIRSGILN. The helical transmembrane segment at 1143–1163 threads the bilayer; the sequence is LLSIIMILVDTIGLMAVWGIS. At 1164 to 1165 the chain is on the extracellular side; it reads YN. Residues 1166 to 1186 form a helical membrane-spanning segment; the sequence is AVSLINLVTAVGMSVEFVSHI. Over 1187-1206 the chain is Cytoplasmic; it reads TRSFAVSTKPTRLERAKDAT. A helical membrane pass occupies residues 1207 to 1227; that stretch reads IFMGSAVFAGVAMTNFPGILI. Residues 1228-1242 lie on the Extracellular side of the membrane; it reads LGFAQAQLIQIFFFR. A helical membrane pass occupies residues 1243–1263; it reads LNLLITLLGLLHGLVFLPVVL. At 1264-1333 the chain is on the cytoplasmic side; it reads SYLGPDVNQA…SSLPKSDQKF (70 aa).

This sequence belongs to the patched family. In terms of assembly, interacts with RAB11A, MYO5B and RAB11FIP2. Interaction with RAB11A, MYO5B and RAB11FIP2 is required for proper transport to the plasma membrane upon cholesterol depletion. Interacts with NPC2. Interacts with LIMA1. In terms of processing, highly glycosylated. Expressed in small intestine, stomach and muscle, along with detectable expression in lung, heart, gall bladder, brain, testis, skin and liver. Expression in liver is extremely low.

The protein localises to the apical cell membrane. Its subcellular location is the cell membrane. The catalysed reaction is cholesterol(in) = cholesterol(out). It catalyses the reaction sitosterol(out) = sitosterol(in). Its function is as follows. Plays a major role in cholesterol homeostasis. Critical for the uptake of cholesterol across the plasma membrane of the intestinal enterocyte. Involved in plant sterol absorption, it transports sitosterol, although at lower rates than cholesterol. May have a function in the transport of multiple lipids and their homeostasis, thereby influencing lipid metabolism regulation. May be involved in caveolin trafficking from the plasma membrane. Acts as a negative regulator of NPC2 and down-regulates its expression and secretion by inhibiting its maturation and accelerating its degradation. The sequence is that of NPC1-like intracellular cholesterol transporter 1 from Mus musculus (Mouse).